The primary structure comprises 369 residues: MDQNCTPLHDLCIAAGGRMVSFAGWEMPVQFSGLMAEHKAVRSDSGMFDISHMGVLRIEGANPKDALQQLVPSDLHRIGPGQACYSVLLNEQGGIIDDLIIYDLGPSLLDESHETLLVVINAACAETDTAWIRQHLERADLQVLDEKKDGVLLALQGPKAIGLLERLSGSDLSELPRFGHCSLNIHGLQAPVFTARTGYTGEDGVELLLKADDGRQLWQLLLEEGVTPCGLGARDTLRLEAAMHLYGQDMDAATTPFEAGLGWLVHLEMPALFIGRQALEQAAEQGPSKRLVGLKLQGRSIARHDYPVIHNGATVGVVTSGSWSPTLQEPIALASLPPALAKLGTELSVEIRGQLQPATVVKRPFYRRS.

The protein belongs to the GcvT family. In terms of assembly, the glycine cleavage system is composed of four proteins: P, T, L and H.

The catalysed reaction is N(6)-[(R)-S(8)-aminomethyldihydrolipoyl]-L-lysyl-[protein] + (6S)-5,6,7,8-tetrahydrofolate = N(6)-[(R)-dihydrolipoyl]-L-lysyl-[protein] + (6R)-5,10-methylene-5,6,7,8-tetrahydrofolate + NH4(+). Functionally, the glycine cleavage system catalyzes the degradation of glycine. The sequence is that of Aminomethyltransferase from Synechococcus sp. (strain CC9311).